A 462-amino-acid polypeptide reads, in one-letter code: ATP synthase subunit beta (462 aa).

151-158 (GGAGVGKT) lines the ATP pocket.

This sequence belongs to the ATPase alpha/beta chains family. F-type ATPases have 2 components, CF(1) - the catalytic core - and CF(0) - the membrane proton channel. CF(1) has five subunits: alpha(3), beta(3), gamma(1), delta(1), epsilon(1). CF(0) has four main subunits: a(1), b(1), b'(1) and c(9-12).

It is found in the cell inner membrane. The catalysed reaction is ATP + H2O + 4 H(+)(in) = ADP + phosphate + 5 H(+)(out). In terms of biological role, produces ATP from ADP in the presence of a proton gradient across the membrane. The catalytic sites are hosted primarily by the beta subunits. The chain is ATP synthase subunit beta from Chlorobium phaeobacteroides (strain BS1).